The sequence spans 206 residues: MAQTRGNLFILSAPSGAGKSSLINALLKKHTDMKVSVSHTTRAKRPGEENGVHYHFVSTDEFKALITKDDFFEWAQVFDNYYGTSKQAIESQLDAGIDVFLDIDWQGAQQVRKIMPSVQTIFILPPSKAELEQRLNNRGQDSQEIIAGRMAQAQSETSHYNEYDFVIVNDDFDTALTDIETIVMAQRLTLKMQSVRHQSLLNSLLK.

A Guanylate kinase-like domain is found at 6–184; sequence GNLFILSAPS…ALTDIETIVM (179 aa). Position 13–20 (13–20) interacts with ATP; sequence APSGAGKS.

This sequence belongs to the guanylate kinase family.

The protein resides in the cytoplasm. The enzyme catalyses GMP + ATP = GDP + ADP. Functionally, essential for recycling GMP and indirectly, cGMP. This chain is Guanylate kinase, found in Pseudoalteromonas translucida (strain TAC 125).